We begin with the raw amino-acid sequence, 502 residues long: Lanosterol 14-alpha demethylase (502 aa).

Residues 22-42 (GNLASMLLIACAFTLSLVYLF) traverse the membrane as a helical segment. Cys-448 is a heme binding site.

Belongs to the cytochrome P450 family. It depends on heme as a cofactor. In terms of processing, ubiquitinated by MARCHF6, leading to proteasomal degradation.

Its subcellular location is the endoplasmic reticulum membrane. The protein resides in the microsome membrane. The catalysed reaction is a 14alpha-methyl steroid + 3 reduced [NADPH--hemoprotein reductase] + 3 O2 = a Delta(14) steroid + formate + 3 oxidized [NADPH--hemoprotein reductase] + 4 H2O + 4 H(+). It carries out the reaction lanosterol + 3 reduced [NADPH--hemoprotein reductase] + 3 O2 = 4,4-dimethyl-5alpha-cholesta-8,14,24-trien-3beta-ol + formate + 3 oxidized [NADPH--hemoprotein reductase] + 4 H2O + 4 H(+). It catalyses the reaction 24,25-dihydrolanosterol + 3 reduced [NADPH--hemoprotein reductase] + 3 O2 = 4,4-dimethyl-8,14-cholestadien-3beta-ol + formate + 3 oxidized [NADPH--hemoprotein reductase] + 4 H2O + 4 H(+). The enzyme catalyses a 14alpha-methyl steroid + reduced [NADPH--hemoprotein reductase] + O2 = a 14alpha-hydroxymethyl steroid + oxidized [NADPH--hemoprotein reductase] + H2O + H(+). The catalysed reaction is a 14alpha-hydroxymethyl steroid + reduced [NADPH--hemoprotein reductase] + O2 = a 14alpha-formyl steroid + oxidized [NADPH--hemoprotein reductase] + 2 H2O + H(+). It carries out the reaction a 14alpha-formyl steroid + reduced [NADPH--hemoprotein reductase] + O2 = a Delta(14) steroid + formate + oxidized [NADPH--hemoprotein reductase] + H2O + 2 H(+). It catalyses the reaction lanosterol + reduced [NADPH--hemoprotein reductase] + O2 = 32-hydroxylanosterol + oxidized [NADPH--hemoprotein reductase] + H2O + H(+). The enzyme catalyses 32-hydroxylanosterol + reduced [NADPH--hemoprotein reductase] + O2 = 32-oxolanosterol + oxidized [NADPH--hemoprotein reductase] + 2 H2O + H(+). The catalysed reaction is 32-oxolanosterol + reduced [NADPH--hemoprotein reductase] + O2 = 4,4-dimethyl-5alpha-cholesta-8,14,24-trien-3beta-ol + formate + oxidized [NADPH--hemoprotein reductase] + H2O + 2 H(+). It carries out the reaction 24,25-dihydrolanosterol + reduced [NADPH--hemoprotein reductase] + O2 = 32-hydroxy-24,25-dihydrolanosterol + oxidized [NADPH--hemoprotein reductase] + H2O + H(+). It catalyses the reaction 32-hydroxy-24,25-dihydrolanosterol + reduced [NADPH--hemoprotein reductase] + O2 = 32-oxo-24,25-dihydrolanosterol + oxidized [NADPH--hemoprotein reductase] + 2 H2O + H(+). The enzyme catalyses 32-oxo-24,25-dihydrolanosterol + reduced [NADPH--hemoprotein reductase] + O2 = 4,4-dimethyl-8,14-cholestadien-3beta-ol + formate + oxidized [NADPH--hemoprotein reductase] + H2O + 2 H(+). It participates in steroid biosynthesis; zymosterol biosynthesis; zymosterol from lanosterol: step 1/6. With respect to regulation, inhibited by azalanstat. Inhibited by azole antifungal agents ketoconazole, itraconazole and fluconazole. Sterol 14alpha-demethylase that plays a critical role in the cholesterol biosynthesis pathway, being cholesterol the major sterol component in mammalian membranes as well as a precursor for bile acid and steroid hormone synthesis. Cytochrome P450 monooxygenase that catalyzes the three-step oxidative removal of the 14alpha-methyl group (C-32) of sterols such as lanosterol (lanosta-8,24-dien-3beta-ol) and 24,25-dihydrolanosterol (DHL) in the form of formate, and converts the sterols to 4,4-dimethyl-5alpha-cholesta-8,14,24-trien-3beta-ol and 4,4-dimethyl-8,14-cholestadien-3beta-ol, respectively, which are intermediates of cholesterol biosynthesis. Can also demethylate substrates not intrinsic to mammals, such as eburicol (24-methylene-24,25-dihydrolanosterol), but at a lower rate than DHL. This Bos taurus (Bovine) protein is Lanosterol 14-alpha demethylase.